The primary structure comprises 376 residues: Erythronate-4-phosphate dehydrogenase (376 aa).

Residues Ser-45 and Thr-67 each coordinate substrate. NAD(+) contacts are provided by residues 127–128, Asp-147, and Thr-176; that span reads QV. Arg-209 is an active-site residue. Residue Asp-233 coordinates NAD(+). Glu-238 is a catalytic residue. Catalysis depends on His-255, which acts as the Proton donor. Gly-258 provides a ligand contact to NAD(+). Substrate is bound at residue Tyr-259.

The protein belongs to the D-isomer specific 2-hydroxyacid dehydrogenase family. PdxB subfamily. In terms of assembly, homodimer.

The protein localises to the cytoplasm. The catalysed reaction is 4-phospho-D-erythronate + NAD(+) = (R)-3-hydroxy-2-oxo-4-phosphooxybutanoate + NADH + H(+). The protein operates within cofactor biosynthesis; pyridoxine 5'-phosphate biosynthesis; pyridoxine 5'-phosphate from D-erythrose 4-phosphate: step 2/5. Functionally, catalyzes the oxidation of erythronate-4-phosphate to 3-hydroxy-2-oxo-4-phosphonooxybutanoate. The chain is Erythronate-4-phosphate dehydrogenase from Aliivibrio fischeri (strain ATCC 700601 / ES114) (Vibrio fischeri).